We begin with the raw amino-acid sequence, 434 residues long: Chaperone SurA (434 aa).

The N-terminal stretch at 1-22 (MKHSKKIVTALLALAMSQTVMA) is a signal peptide. PpiC domains follow at residues 173 to 274 (EVEF…KVMD) and 283 to 383 (VEEV…QLMD).

The protein resides in the periplasm. The enzyme catalyses [protein]-peptidylproline (omega=180) = [protein]-peptidylproline (omega=0). Functionally, chaperone involved in the correct folding and assembly of outer membrane proteins. Recognizes specific patterns of aromatic residues and the orientation of their side chains, which are found more frequently in integral outer membrane proteins. May act in both early periplasmic and late outer membrane-associated steps of protein maturation. This Shewanella denitrificans (strain OS217 / ATCC BAA-1090 / DSM 15013) protein is Chaperone SurA.